Here is a 30-residue protein sequence, read N- to C-terminus: Nattererin-1 (30 aa).

Expressed by the skin glands.

It is found in the secreted. In terms of biological role, probably has antibacterial activity. This is Nattererin-1 from Physalaemus nattereri (Cuyaba dwarf frog).